We begin with the raw amino-acid sequence, 245 residues long: Membrane-associated progesterone-binding protein 4 (245 aa).

Residues Arg6 to Phe26 form a helical membrane-spanning segment. Positions Lys39–Val138 constitute a Cytochrome b5 heme-binding domain. The tract at residues Glu45–Val138 is steroid-binding.

The protein belongs to the cytochrome b5 family. MAPR subfamily.

The protein resides in the membrane. This Arabidopsis thaliana (Mouse-ear cress) protein is Membrane-associated progesterone-binding protein 4.